We begin with the raw amino-acid sequence, 570 residues long: Sulfite reductase [NADPH] hemoprotein beta-component (570 aa).

[4Fe-4S] cluster contacts are provided by Cys-434, Cys-440, Cys-479, and Cys-483. Cys-483 is a siroheme binding site.

The protein belongs to the nitrite and sulfite reductase 4Fe-4S domain family. In terms of assembly, alpha(8)-beta(8). The alpha component is a flavoprotein, the beta component is a hemoprotein. Siroheme is required as a cofactor. [4Fe-4S] cluster serves as cofactor.

It catalyses the reaction hydrogen sulfide + 3 NADP(+) + 3 H2O = sulfite + 3 NADPH + 4 H(+). The protein operates within sulfur metabolism; hydrogen sulfide biosynthesis; hydrogen sulfide from sulfite (NADPH route): step 1/1. Functionally, component of the sulfite reductase complex that catalyzes the 6-electron reduction of sulfite to sulfide. This is one of several activities required for the biosynthesis of L-cysteine from sulfate. The polypeptide is Sulfite reductase [NADPH] hemoprotein beta-component (Shigella dysenteriae serotype 1 (strain Sd197)).